The chain runs to 616 residues: MKKGFIQNVHLAPATSLFVPQYKNDFFHLKTKAFLVHKLSESTNAAFTNLLHTLTLKLGFASDTFTVNHLVISYVKLKEINTARKLFDEMCEPNVVSWTSVISGYNDMGKPQNALSMFQKMHEDRPVPPNEYTFASVFKACSALAESRIGKNIHARLEISGLRRNIVVSSSLVDMYGKCNDVETARRVFDSMIGYGRNVVSWTSMITAYAQNARGHEAIELFRSFNAALTSDRANQFMLASVISACSSLGRLQWGKVAHGLVTRGGYESNTVVATSLLDMYAKCGSLSCAEKIFLRIRCHSVISYTSMIMAKAKHGLGEAAVKLFDEMVAGRINPNYVTLLGVLHACSHSGLVNEGLEYLSLMAEKYGVVPDSRHYTCVVDMLGRFGRVDEAYELAKTIEVGAEQGALLWGALLSAGRLHGRVEIVSEASKRLIQSNQQVTSAYIALSNAYAVSGGWEDSESLRLEMKRSGNVKERACSWIENKDSVYVFHAGDLSCDESGEIERFLKDLEKRMKERGHRGSSSMITTSSSVFVDVDEEAKDEMVSLHCERLALAYGLLHLPAGSTIRIMNNLRMCRDCHEAFKLISEIVEREIVVRDVNRFHCFKNGSCTCRDYW.

PPR repeat units lie at residues 63–93 (DTFT…MCEP), 94–128 (NVVS…RPVP), 130–164 (NEYT…GLRR), 165–199 (NIVV…GRNV), 200–228 (VSWT…FNAA), 235–269 (NQFM…GYES), 270–300 (NTVV…IRCH), 301–335 (SVIS…RINP), 336–371 (NYVT…GVVP), and 372–402 (DSRH…IEVG). The type E motif stretch occupies residues 409–484 (LWGALLSAGR…ERACSWIENK (76 aa)). The type E(+) motif stretch occupies residues 485–515 (DSVYVFHAGDLSCDESGEIERFLKDLEKRMK). The segment at 522–616 (SSSMITTSSS…NGSCTCRDYW (95 aa)) is type DYW motif.

The protein belongs to the PPR family. PCMP-H subfamily.

The polypeptide is Pentatricopeptide repeat-containing protein At4g15720 (PCMP-H1) (Arabidopsis thaliana (Mouse-ear cress)).